Consider the following 233-residue polypeptide: Large ribosomal subunit protein uL1 (233 aa).

It belongs to the universal ribosomal protein uL1 family. Part of the 50S ribosomal subunit.

Functionally, binds directly to 23S rRNA. The L1 stalk is quite mobile in the ribosome, and is involved in E site tRNA release. Protein L1 is also a translational repressor protein, it controls the translation of the L11 operon by binding to its mRNA. The chain is Large ribosomal subunit protein uL1 from Finegoldia magna (strain ATCC 29328 / DSM 20472 / WAL 2508) (Peptostreptococcus magnus).